Reading from the N-terminus, the 408-residue chain is Argininosuccinate synthase (408 aa).

ATP-binding positions include alanine 10–serine 18 and alanine 37. The L-citrulline site is built by tyrosine 90 and serine 95. Glycine 120 provides a ligand contact to ATP. Residues threonine 122, asparagine 126, and aspartate 127 each contribute to the L-aspartate site. Residue asparagine 126 coordinates L-citrulline. L-citrulline contacts are provided by arginine 130, serine 182, serine 191, glutamate 267, and tyrosine 279.

The protein belongs to the argininosuccinate synthase family. Type 1 subfamily. As to quaternary structure, homotetramer.

The protein localises to the cytoplasm. The enzyme catalyses L-citrulline + L-aspartate + ATP = 2-(N(omega)-L-arginino)succinate + AMP + diphosphate + H(+). Its pathway is amino-acid biosynthesis; L-arginine biosynthesis; L-arginine from L-ornithine and carbamoyl phosphate: step 2/3. The chain is Argininosuccinate synthase from Paraburkholderia phytofirmans (strain DSM 17436 / LMG 22146 / PsJN) (Burkholderia phytofirmans).